We begin with the raw amino-acid sequence, 287 residues long: Pantothenate synthetase (287 aa).

An ATP-binding site is contributed by 30 to 37 (MGNLHSGH). H37 serves as the catalytic Proton donor. Q61 is a binding site for (R)-pantoate. Residue Q61 coordinates beta-alanine. Position 149 to 152 (149 to 152 (GEKD)) interacts with ATP. Q155 is a (R)-pantoate binding site. Residues V178 and 186–189 (LSSR) each bind ATP.

The protein belongs to the pantothenate synthetase family. Homodimer.

Its subcellular location is the cytoplasm. The catalysed reaction is (R)-pantoate + beta-alanine + ATP = (R)-pantothenate + AMP + diphosphate + H(+). The protein operates within cofactor biosynthesis; (R)-pantothenate biosynthesis; (R)-pantothenate from (R)-pantoate and beta-alanine: step 1/1. In terms of biological role, catalyzes the condensation of pantoate with beta-alanine in an ATP-dependent reaction via a pantoyl-adenylate intermediate. This is Pantothenate synthetase from Pseudomonas entomophila (strain L48).